The chain runs to 264 residues: Proteasome subunit beta type-4 (264 aa).

Met-1 carries the N-acetylmethionine modification. The propeptide occupies Met-1–Arg-45. Residue Tyr-102 is modified to Phosphotyrosine.

It belongs to the peptidase T1B family. As to quaternary structure, the 26S proteasome consists of a 20S proteasome core and two 19S regulatory subunits. The 20S proteasome core is a barrel-shaped complex made of 28 subunits that are arranged in four stacked rings. The two outer rings are each formed by seven alpha subunits, and the two inner rings are formed by seven beta subunits. The proteolytic activity is exerted by three beta-subunits PSMB5, PSMB6 and PSMB7. Forms a ternary complex with SMAD1 and OAZ1 before PSMB4 is incorporated into the 20S proteasome. Interacts with PRPF19.

Its subcellular location is the cytoplasm. It localises to the nucleus. Functionally, non-catalytic component of the 20S core proteasome complex involved in the proteolytic degradation of most intracellular proteins. This complex plays numerous essential roles within the cell by associating with different regulatory particles. Associated with two 19S regulatory particles, forms the 26S proteasome and thus participates in the ATP-dependent degradation of ubiquitinated proteins. The 26S proteasome plays a key role in the maintenance of protein homeostasis by removing misfolded or damaged proteins that could impair cellular functions, and by removing proteins whose functions are no longer required. Associated with the PA200 or PA28, the 20S proteasome mediates ubiquitin-independent protein degradation. This type of proteolysis is required in several pathways including spermatogenesis (20S-PA200 complex) or generation of a subset of MHC class I-presented antigenic peptides (20S-PA28 complex). SMAD1/OAZ1/PSMB4 complex mediates the degradation of the CREBBP/EP300 repressor SNIP1. The sequence is that of Proteasome subunit beta type-4 (PSMB4) from Bos taurus (Bovine).